The chain runs to 158 residues: MSYDYEKTSLTLYRAVFKANYDGDVGRYLHPDKELAEAAEVAPLLHPTFDSPNTPGVPARAPDIVAGRDGLYAPDTGGTSVFDRAGVLRRADGDFVIPDGTDIPPDLKVKQDSYNKRLQATHYTIMPAKPMYREVLMGQLDNFVRNAIRRQWEKARGL.

As to quaternary structure, forms a heterotetramer with Tsi2 consisting of two Tse2 dimers and two Tsi2 dimers. Formation of the complex inactivates Tse2 enzymatic activity.

It localises to the secreted. Toxin secreted by the H1 type VI (H1-T6SS) secretion system into the cytoplasm of recipient cells. Acts likely as a NAD-dependent cytotoxin towards both prokaryotic and eukaryotic cells. This is Toxin Tse2 from Pseudomonas aeruginosa (strain ATCC 15692 / DSM 22644 / CIP 104116 / JCM 14847 / LMG 12228 / 1C / PRS 101 / PAO1).